A 622-amino-acid polypeptide reads, in one-letter code: SLAIN motif-containing protein-like (622 aa).

Residues 34 to 60 (DLKEVQKLHELVKRLEIQNQQLKIKRN) are a coiled coil. 2 disordered regions span residues 404-441 (HRYSPSPLSSPRCQSPSAAESRATTSRIRPPRRSIQNH) and 473-622 (VRSS…DGCY). Over residues 405-415 (RYSPSPLSSPR) the composition is skewed to low complexity. 4 stretches are compositionally biased toward polar residues: residues 416–430 (CQSPSAAESRATTSR), 484–502 (QGPSSRLTRMQQPSTSTPP), 525–591 (VSTS…STVP), and 599–611 (SRRSLSSAKMNST).

Belongs to the SLAIN motif-containing family.

This Xenopus tropicalis (Western clawed frog) protein is SLAIN motif-containing protein-like.